Here is a 455-residue protein sequence, read N- to C-terminus: Regulatory protein LuxO (455 aa).

One can recognise a Response regulatory domain in the interval 1–112 (MVEDTASVAA…RLRVTVNNAI (112 aa)). Position 47 is a 4-aspartylphosphate (Asp-47). Residues 132-361 (FIGSSQTMQA…LQNVLRNVVV (230 aa)) enclose the Sigma-54 factor interaction domain. ATP is bound by residues 160–167 (GESGTGKE) and 223–232 (ADGGTLFLDE).

In terms of biological role, involved in the regulation of different processes depending on the cell density. Acts together with sigma-54 to repress, perhaps indirectly, some genes. The protein is Regulatory protein LuxO (luxO) of Vibrio cholerae serotype O1 (strain ATCC 39315 / El Tor Inaba N16961).